A 142-amino-acid chain; its full sequence is Large ribosomal subunit protein uL13 (142 aa).

It belongs to the universal ribosomal protein uL13 family. As to quaternary structure, part of the 50S ribosomal subunit.

In terms of biological role, this protein is one of the early assembly proteins of the 50S ribosomal subunit, although it is not seen to bind rRNA by itself. It is important during the early stages of 50S assembly. The protein is Large ribosomal subunit protein uL13 of Pectobacterium atrosepticum (strain SCRI 1043 / ATCC BAA-672) (Erwinia carotovora subsp. atroseptica).